A 263-amino-acid chain; its full sequence is 4-hydroxy-tetrahydrodipicolinate reductase (263 aa).

Residues 7 to 12, 96 to 98, and 122 to 125 each bind NAD(+); these read GFKGRM, GTT, and APNF. Histidine 152 acts as the Proton donor/acceptor in catalysis. Histidine 153 is a binding site for (S)-2,3,4,5-tetrahydrodipicolinate. Lysine 156 acts as the Proton donor in catalysis. 162–163 serves as a coordination point for (S)-2,3,4,5-tetrahydrodipicolinate; it reads GT.

Belongs to the DapB family.

It is found in the cytoplasm. It catalyses the reaction (S)-2,3,4,5-tetrahydrodipicolinate + NAD(+) + H2O = (2S,4S)-4-hydroxy-2,3,4,5-tetrahydrodipicolinate + NADH + H(+). The catalysed reaction is (S)-2,3,4,5-tetrahydrodipicolinate + NADP(+) + H2O = (2S,4S)-4-hydroxy-2,3,4,5-tetrahydrodipicolinate + NADPH + H(+). The protein operates within amino-acid biosynthesis; L-lysine biosynthesis via DAP pathway; (S)-tetrahydrodipicolinate from L-aspartate: step 4/4. In terms of biological role, catalyzes the conversion of 4-hydroxy-tetrahydrodipicolinate (HTPA) to tetrahydrodipicolinate. The polypeptide is 4-hydroxy-tetrahydrodipicolinate reductase (Listeria innocua serovar 6a (strain ATCC BAA-680 / CLIP 11262)).